Here is a 75-residue protein sequence, read N- to C-terminus: MYB-like transcription factor ETC3 (75 aa).

A disordered region spans residues 1–20 (MDNHRRTKQPKTNSIVTSSS). The region spanning 34-71 (SQEEEDLVSRMHKLVGDRWELIAGRIPGRTAGEIERFW) is the Myb-like domain.

In terms of tissue distribution, expressed in leaf epidermal cells, stomate guard cells in leaves, cotyledons and hypocotyls, inflorescences, developing seeds and siliques.

The protein resides in the nucleus. Its function is as follows. MYB-type transcription factor involved in epidermal cell fate specification. Acts as a negative regulator of trichome development, including endoreplication, by mediating lateral inhibition. Promotes the formation of hair developing cells in H position in root epidermis, probably by inhibiting non-hair cell formation. May have pleiotropic effects on flowering development and epidermal cell size through the regulation of endoreduplication. The polypeptide is MYB-like transcription factor ETC3 (ETC3) (Arabidopsis thaliana (Mouse-ear cress)).